Consider the following 86-residue polypeptide: Small ribosomal subunit protein bS16 (86 aa).

It belongs to the bacterial ribosomal protein bS16 family.

The protein is Small ribosomal subunit protein bS16 of Trichormus variabilis (strain ATCC 29413 / PCC 7937) (Anabaena variabilis).